A 525-amino-acid polypeptide reads, in one-letter code: GMP synthase [glutamine-hydrolyzing] (525 aa).

In terms of domain architecture, Glutamine amidotransferase type-1 spans 9 to 207; it reads RILILDFGSQ…ILDICECEAL (199 aa). Residue C86 is the Nucleophile of the active site. Residues H181 and E183 contribute to the active site. One can recognise a GMPS ATP-PPase domain in the interval 208–400; the sequence is WTPSKIAEDA…LGLPYDMVYR (193 aa). Residue 235-241 participates in ATP binding; it reads SGGVDSS.

In terms of assembly, homodimer.

It catalyses the reaction XMP + L-glutamine + ATP + H2O = GMP + L-glutamate + AMP + diphosphate + 2 H(+). It participates in purine metabolism; GMP biosynthesis; GMP from XMP (L-Gln route): step 1/1. Its function is as follows. Catalyzes the synthesis of GMP from XMP. The protein is GMP synthase [glutamine-hydrolyzing] of Pseudomonas fluorescens (strain SBW25).